Here is a 336-residue protein sequence, read N- to C-terminus: Phenylalanine--tRNA ligase alpha subunit (336 aa).

Glu-259 provides a ligand contact to Mg(2+).

It belongs to the class-II aminoacyl-tRNA synthetase family. Phe-tRNA synthetase alpha subunit type 1 subfamily. In terms of assembly, tetramer of two alpha and two beta subunits. Mg(2+) serves as cofactor.

It localises to the cytoplasm. The enzyme catalyses tRNA(Phe) + L-phenylalanine + ATP = L-phenylalanyl-tRNA(Phe) + AMP + diphosphate + H(+). The protein is Phenylalanine--tRNA ligase alpha subunit of Tropheryma whipplei (strain TW08/27) (Whipple's bacillus).